A 705-amino-acid polypeptide reads, in one-letter code: Ribosomal RNA large subunit methyltransferase K/L (705 aa).

Positions 43–154 (VVYRCCLWSR…GEKGILGFDL (112 aa)) constitute a THUMP domain.

Belongs to the methyltransferase superfamily. RlmKL family.

The protein localises to the cytoplasm. The catalysed reaction is guanosine(2445) in 23S rRNA + S-adenosyl-L-methionine = N(2)-methylguanosine(2445) in 23S rRNA + S-adenosyl-L-homocysteine + H(+). It catalyses the reaction guanosine(2069) in 23S rRNA + S-adenosyl-L-methionine = N(2)-methylguanosine(2069) in 23S rRNA + S-adenosyl-L-homocysteine + H(+). Its function is as follows. Specifically methylates the guanine in position 2445 (m2G2445) and the guanine in position 2069 (m7G2069) of 23S rRNA. This is Ribosomal RNA large subunit methyltransferase K/L from Aliivibrio fischeri (strain ATCC 700601 / ES114) (Vibrio fischeri).